Reading from the N-terminus, the 104-residue chain is Large ribosomal subunit protein uL24 (104 aa).

This sequence belongs to the universal ribosomal protein uL24 family. As to quaternary structure, part of the 50S ribosomal subunit.

In terms of biological role, one of two assembly initiator proteins, it binds directly to the 5'-end of the 23S rRNA, where it nucleates assembly of the 50S subunit. One of the proteins that surrounds the polypeptide exit tunnel on the outside of the subunit. The polypeptide is Large ribosomal subunit protein uL24 (Salmonella paratyphi A (strain ATCC 9150 / SARB42)).